Here is a 445-residue protein sequence, read N- to C-terminus: Putative U-box domain-containing protein 47 (445 aa).

Residues 64-137 (EVPKEFICTL…KEWCLIHNFD (74 aa)) form the U-box domain.

It catalyses the reaction S-ubiquitinyl-[E2 ubiquitin-conjugating enzyme]-L-cysteine + [acceptor protein]-L-lysine = [E2 ubiquitin-conjugating enzyme]-L-cysteine + N(6)-ubiquitinyl-[acceptor protein]-L-lysine.. The protein operates within protein modification; protein ubiquitination. Functionally, functions as an E3 ubiquitin ligase. This is Putative U-box domain-containing protein 47 (PUB47) from Arabidopsis thaliana (Mouse-ear cress).